The sequence spans 348 residues: UDP-3-O-acylglucosamine N-acyltransferase (348 aa).

Histidine 243 serves as the catalytic Proton acceptor.

It belongs to the transferase hexapeptide repeat family. LpxD subfamily. As to quaternary structure, homotrimer.

The catalysed reaction is a UDP-3-O-[(3R)-3-hydroxyacyl]-alpha-D-glucosamine + a (3R)-hydroxyacyl-[ACP] = a UDP-2-N,3-O-bis[(3R)-3-hydroxyacyl]-alpha-D-glucosamine + holo-[ACP] + H(+). Its pathway is bacterial outer membrane biogenesis; LPS lipid A biosynthesis. Functionally, catalyzes the N-acylation of UDP-3-O-acylglucosamine using 3-hydroxyacyl-ACP as the acyl donor. Is involved in the biosynthesis of lipid A, a phosphorylated glycolipid that anchors the lipopolysaccharide to the outer membrane of the cell. The protein is UDP-3-O-acylglucosamine N-acyltransferase of Hahella chejuensis (strain KCTC 2396).